Here is a 286-residue protein sequence, read N- to C-terminus: Shikimate dehydrogenase (NADP(+)) (286 aa).

Residues 22–24 and Thr-71 contribute to the shikimate site; that span reads SRS. The Proton acceptor role is filled by Lys-75. Glu-87 is a binding site for NADP(+). Shikimate-binding residues include Asn-96 and Asp-111. NADP(+) contacts are provided by residues 136–140, 160–165, and Ile-225; these read GAGGA and NRTAAR. Residue Tyr-227 participates in shikimate binding. Residue Gly-248 coordinates NADP(+).

It belongs to the shikimate dehydrogenase family. In terms of assembly, homodimer.

It catalyses the reaction shikimate + NADP(+) = 3-dehydroshikimate + NADPH + H(+). The protein operates within metabolic intermediate biosynthesis; chorismate biosynthesis; chorismate from D-erythrose 4-phosphate and phosphoenolpyruvate: step 4/7. In terms of biological role, involved in the biosynthesis of the chorismate, which leads to the biosynthesis of aromatic amino acids. Catalyzes the reversible NADPH linked reduction of 3-dehydroshikimate (DHSA) to yield shikimate (SA). The protein is Shikimate dehydrogenase (NADP(+)) of Sinorhizobium fredii (strain NBRC 101917 / NGR234).